Reading from the N-terminus, the 1630-residue chain is Separin (1630 aa).

The interval 1016–1037 (SKHSTGLKLCDSPRSSSMTPRG) is disordered. Residues 1443–1542 (EDNISMILNP…SAAMKYYGKL (100 aa)) enclose the Peptidase C50 domain. The active site involves C1531.

In terms of assembly, may bind calcium. Interacts with PDS1. Interacts with MCD1.

It localises to the nucleus. The protein localises to the cytoplasm. It is found in the cytoskeleton. The protein resides in the microtubule organizing center. Its subcellular location is the spindle pole body. It carries out the reaction All bonds known to be hydrolyzed by this endopeptidase have arginine in P1 and an acidic residue in P4. P6 is often occupied by an acidic residue or by a hydroxy-amino-acid residue, the phosphorylation of which enhances cleavage.. With respect to regulation, it is inactivated via its interaction with PDS1, which probably covers its active site. PDS1 degradation at anaphase, liberates it and triggers MCD1 cleavage. Its function is as follows. Caspase-like protease, which plays a central role in the chromosome segregation by cleaving the MCD1/SCC1 subunit of the cohesin complex at the onset of anaphase. During most of the cell cycle, it is inactivated by securin/PDS1 protein. It also promotes anaphase spindle elongation. A component of the FEAR (CDC14 early anaphase release) network which promotes CDC14 release from the nucleolus during early anaphase. Cleaves SLK19. This is Separin (ESP1) from Saccharomyces cerevisiae (strain ATCC 204508 / S288c) (Baker's yeast).